A 1127-amino-acid chain; its full sequence is Collagen alpha-2(I) chain (1127 aa).

Residues 1 to 16 (DGKPGLPGPAGPPGPP) are compositionally biased toward pro residues. Residues 1-1017 (DGKPGLPGPA…GPAGPAGGGY (1017 aa)) form a disordered region. Low complexity-rich tracts occupy residues 171 to 191 (AGPA…AAGP), 221 to 230 (EPGPNGAVGP), and 237 to 258 (PGNN…AGAP). The segment covering 260-270 (FPGPRGGPGPQ) has biased composition (pro residues). Residues 272–282 (PQGAAGQRGLA) are compositionally biased toward low complexity. Residues 289 to 298 (GVKGDGGPKG) are compositionally biased toward gly residues. 4 stretches are compositionally biased toward low complexity: residues 326–345 (ATGP…RGMP), 355–398 (AAGP…AGPA), 436–449 (APGP…TGAT), and 461–473 (QGAA…QGLP). Positions 474–483 (GPAGGAGEAG) are enriched in gly residues. Positions 508–518 (NPGAAGASGPQ) are enriched in low complexity. A compositionally biased stretch (gly residues) spans 531–568 (GTDGGKGEPGAAGAAGGPGHQGPGGMPGERGAAGGPGG). Over residues 569–580 (KGEKGEAGHRGP) the composition is skewed to basic and acidic residues. Composition is skewed to low complexity over residues 611–625 (SGSF…ARGA) and 634–647 (PAGA…PGAD). Positions 657 to 666 (GPSGGKGESG) are enriched in gly residues. Composition is skewed to low complexity over residues 667 to 692 (PSGP…TGAR), 703 to 730 (FPGA…PAGK), and 758 to 778 (SGEK…PLGL). The segment covering 792–801 (GSPGGAGAVG) has biased composition (gly residues). 2 stretches are compositionally biased toward low complexity: residues 802–824 (EAGR…LGLP) and 860–872 (PGSS…AGAP). Over residues 876 to 897 (GPSGGAGRPGNRGESGPGGAAG) the composition is skewed to gly residues. Residues 898 to 913 (AVGPAGARGAAGPSGP) are compositionally biased toward low complexity. Positions 914-928 (RGEKGVAGEKGERGM) are enriched in basic and acidic residues. Low complexity-rich tracts occupy residues 937–956 (LQGM…AGPN) and 986–997 (PGARGPPGYVGP). Over residues 998 to 1010 (AGPPGXPGLPGPA) the composition is skewed to pro residues. Residues 1093–1127 (RTNKPSRLPLLDLAPLDLGGADQEFGLDLGPVCFK) enclose the Fibrillar collagen NC1 domain.

Belongs to the fibrillar collagen family.

The protein localises to the secreted. Its subcellular location is the extracellular space. The protein resides in the extracellular matrix. This Epinephelus marginatus (Dusky grouper) protein is Collagen alpha-2(I) chain.